Here is a 457-residue protein sequence, read N- to C-terminus: MATGKIVQIIGAVIDVEFPQDAVPKVYDALKVESGLTLEVQQQLGGGLVRCIALGTSDGLKRGLKVENTGNPIQVPVGTKTLGRIMNVLGEPIDEKGPIGEEARWDIHRAAPSYEEQSNSTELLETGIKVIDLICPFAKGGKVGLFGGAGVGKTVNMMELIRNIAIEHSGYSVFAGVGERTREGNDFYHEMTDSNVLDKVSLVYGQMNEPPGNRLRVALTGLTMAEKFRDEGRDVLFFVDNIYRYTLAGTEVSALLGRMPSAVGYQPTLAEEMGVLQERITSTKTGSITSVQAVYVPADDLTDPSPATTFAHLDSTVVLSRNIASLGIYPAVDPLDSTSRQLDPLVVGEEHYNVARGVQGTLQRYKELKDIIAILGMDELSEDDKLVVARARKIERFLSQPFFVAEVFTGSQGKYVSLKDTIRGFKGILEGEFDHIPEQAFYMAGSIDEVVERASKM.

Gly147–Thr154 is a binding site for ATP.

The protein belongs to the ATPase alpha/beta chains family. In terms of assembly, F-type ATPases have 2 components, CF(1) - the catalytic core - and CF(0) - the membrane proton channel. CF(1) has five subunits: alpha(3), beta(3), gamma(1), delta(1), epsilon(1). CF(0) has three main subunits: a(1), b(2) and c(9-12). The alpha and beta chains form an alternating ring which encloses part of the gamma chain. CF(1) is attached to CF(0) by a central stalk formed by the gamma and epsilon chains, while a peripheral stalk is formed by the delta and b chains.

The protein resides in the cell inner membrane. It carries out the reaction ATP + H2O + 4 H(+)(in) = ADP + phosphate + 5 H(+)(out). In terms of biological role, produces ATP from ADP in the presence of a proton gradient across the membrane. The catalytic sites are hosted primarily by the beta subunits. The sequence is that of ATP synthase subunit beta from Actinobacillus pleuropneumoniae serotype 3 (strain JL03).